The primary structure comprises 189 residues: Leucine repeat adapter protein 25 (189 aa).

A Phosphoserine modification is found at serine 28. The tract at residues 54 to 82 (ELSRAARAPDGPRHAAGSANSGSAAGPRR) is disordered. The span at 68–79 (AAGSANSGSAAG) shows a compositional bias: low complexity. Residues 86–114 (LDSALAALRKEMVGLRQLDMSLLCQLWGL) form an LRR repeat. Positions 136–175 (SSLHSDSSYPPDAGLSDDEEPPDASLPPDPPPLTVPQTHN) are disordered. A compositionally biased stretch (pro residues) spans 159-169 (ASLPPDPPPLT). Position 188 is a phosphoserine (serine 188).

It belongs to the FAM89 family. As to quaternary structure, interacts with SKI. Interacts (via LRR repeat) with CDC42BPA (via AGC-kinase C-terminal domain), CDC42BPB (via AGC-kinase C-terminal domain) and LIMK1 (via LIM zinc-binding domains). Forms a tripartite complex with CDC42BPA, CDC42BPB and LIMK1. (Microbial infection) Interacts with mouse mammary tumor virus (MMTV) envelope glycoprotein gp70. As to expression, widely expressed. Expressed in the early postnatal brain.

The protein resides in the cytoplasm. It is found in the cell projection. Its subcellular location is the lamellipodium. The protein localises to the cell surface. In terms of biological role, negatively regulates TGF-beta-induced signaling; in cooperation with SKI prevents the translocation of SMAD2 from the nucleus to the cytoplasm in response to TGF-beta. Acts as an adapter that mediates the specific recognition of LIMK1 by CDC42BPA and CDC42BPB in the lamellipodia. LRAP25-mediated CDC42BPA/CDC42BPB targeting to LIMK1 and the lamellipodium results in LIMK1 activation and the subsequent phosphorylation of CFL1 which is important for lamellipodial F-actin regulation. (Microbial infection) May be a receptor for mouse mammary tumor virus (MMTV). In Mus musculus (Mouse), this protein is Leucine repeat adapter protein 25.